Consider the following 791-residue polypeptide: Phenylalanine--tRNA ligase beta subunit (791 aa).

The region spanning 39–148 is the tRNA-binding domain; sequence AADFSGVVVA…ADAPVGADIR (110 aa). One can recognise a B5 domain in the interval 401-476; it reads PLRAPVRLRE…RVYGYDAIPR (76 aa). Residues Asp454, Asp460, Glu463, and Glu464 each contribute to the Mg(2+) site. The 94-residue stretch at 697-790 folds into the FDX-ACB domain; the sequence is SRFPLVRRDL…LAADFGAKLR (94 aa).

It belongs to the phenylalanyl-tRNA synthetase beta subunit family. Type 1 subfamily. Tetramer of two alpha and two beta subunits. The cofactor is Mg(2+).

Its subcellular location is the cytoplasm. It catalyses the reaction tRNA(Phe) + L-phenylalanine + ATP = L-phenylalanyl-tRNA(Phe) + AMP + diphosphate + H(+). This chain is Phenylalanine--tRNA ligase beta subunit, found in Methylococcus capsulatus (strain ATCC 33009 / NCIMB 11132 / Bath).